We begin with the raw amino-acid sequence, 337 residues long: 4-hydroxy-2-oxovalerate aldolase (337 aa).

The Pyruvate carboxyltransferase domain maps to 6–256; the sequence is IRIMDTTLRD…ETGIDLFQIM (251 aa). Residue 14-15 coordinates substrate; the sequence is RD. Mn(2+) is bound at residue D15. H18 functions as the Proton acceptor in the catalytic mechanism. Substrate contacts are provided by S168 and H195. 2 residues coordinate Mn(2+): H195 and H197. Residue Y286 participates in substrate binding.

The protein belongs to the 4-hydroxy-2-oxovalerate aldolase family.

It carries out the reaction (S)-4-hydroxy-2-oxopentanoate = acetaldehyde + pyruvate. This is 4-hydroxy-2-oxovalerate aldolase (nahM) from Geobacillus genomosp. 3.